Here is a 99-residue protein sequence, read N- to C-terminus: Large ribosomal subunit protein eL42 (99 aa).

Belongs to the eukaryotic ribosomal protein eL42 family.

The sequence is that of Large ribosomal subunit protein eL42 (RPL44) from Chlamydomonas reinhardtii (Chlamydomonas smithii).